Here is a 706-residue protein sequence, read N- to C-terminus: Transferrin-binding protein B (706 aa).

A signal peptide spans 1–20; it reads MKHIPLTTLCVAISAVLLTA. Cysteine 21 carries N-palmitoyl cysteine lipidation. Cysteine 21 carries S-diacylglycerol cysteine lipidation. 2 disordered regions span residues 26 to 92 and 384 to 412; these read GSNP…KEQV and GSAI…LEGG. Positions 42-51 are enriched in gly residues; that stretch reads GNTGNTGNAG. Residues 389-410 are compositionally biased toward basic and acidic residues; the sequence is SDKEKDSETKHPFTSDAKDRLE.

The protein belongs to the TbpB family.

Its subcellular location is the cell outer membrane. It is found in the cell surface. Moraxella acquires iron by extracting it from serum transferrin (TF) in its human host. Acts as a transferrin receptor and is required for transferrin utilization. This Moraxella catarrhalis (Branhamella catarrhalis) protein is Transferrin-binding protein B.